A 333-amino-acid chain; its full sequence is Ketol-acid reductoisomerase (NADP(+)) (333 aa).

Positions 1 to 179 (MFYDDDADLT…GGTRAGVIKT (179 aa)) constitute a KARI N-terminal Rossmann domain. Residues 22-25 (YGSQ), K45, S48, S50, and 80-83 (DTAQ) each bind NADP(+). H105 is an active-site residue. G131 is an NADP(+) binding site. The KARI C-terminal knotted domain occupies 180 to 325 (TFKDETETDL…KRLRDLMSWV (146 aa)). 4 residues coordinate Mg(2+): D188, E192, E224, and E228. S249 provides a ligand contact to substrate.

This sequence belongs to the ketol-acid reductoisomerase family. Mg(2+) serves as cofactor.

It carries out the reaction (2R)-2,3-dihydroxy-3-methylbutanoate + NADP(+) = (2S)-2-acetolactate + NADPH + H(+). The enzyme catalyses (2R,3R)-2,3-dihydroxy-3-methylpentanoate + NADP(+) = (S)-2-ethyl-2-hydroxy-3-oxobutanoate + NADPH + H(+). It functions in the pathway amino-acid biosynthesis; L-isoleucine biosynthesis; L-isoleucine from 2-oxobutanoate: step 2/4. The protein operates within amino-acid biosynthesis; L-valine biosynthesis; L-valine from pyruvate: step 2/4. Involved in the biosynthesis of branched-chain amino acids (BCAA). Catalyzes an alkyl-migration followed by a ketol-acid reduction of (S)-2-acetolactate (S2AL) to yield (R)-2,3-dihydroxy-isovalerate. In the isomerase reaction, S2AL is rearranged via a Mg-dependent methyl migration to produce 3-hydroxy-3-methyl-2-ketobutyrate (HMKB). In the reductase reaction, this 2-ketoacid undergoes a metal-dependent reduction by NADPH to yield (R)-2,3-dihydroxy-isovalerate. The chain is Ketol-acid reductoisomerase (NADP(+)) from Mycobacterium avium.